Here is a 556-residue protein sequence, read N- to C-terminus: 2-succinyl-5-enolpyruvyl-6-hydroxy-3-cyclohexene-1-carboxylate synthase (556 aa).

The protein belongs to the TPP enzyme family. MenD subfamily. Homodimer. The cofactor is Mg(2+). Requires Mn(2+) as cofactor. It depends on thiamine diphosphate as a cofactor.

The catalysed reaction is isochorismate + 2-oxoglutarate + H(+) = 5-enolpyruvoyl-6-hydroxy-2-succinyl-cyclohex-3-ene-1-carboxylate + CO2. It participates in quinol/quinone metabolism; 1,4-dihydroxy-2-naphthoate biosynthesis; 1,4-dihydroxy-2-naphthoate from chorismate: step 2/7. Its pathway is quinol/quinone metabolism; menaquinone biosynthesis. In terms of biological role, catalyzes the thiamine diphosphate-dependent decarboxylation of 2-oxoglutarate and the subsequent addition of the resulting succinic semialdehyde-thiamine pyrophosphate anion to isochorismate to yield 2-succinyl-5-enolpyruvyl-6-hydroxy-3-cyclohexene-1-carboxylate (SEPHCHC). This Escherichia coli (strain 55989 / EAEC) protein is 2-succinyl-5-enolpyruvyl-6-hydroxy-3-cyclohexene-1-carboxylate synthase.